The chain runs to 442 residues: tRNA modification GTPase MnmE (442 aa).

Arg21, Glu79, and Lys118 together coordinate (6S)-5-formyl-5,6,7,8-tetrahydrofolate. Residues 215–365 (GLKIAIVGKP…LENKLSSYCN (151 aa)) enclose the TrmE-type G domain. GTP is bound by residues 225–230 (NVGKSS), 244–250 (TNEAGTT), and 269–272 (DTAG). 2 residues coordinate Mg(2+): Ser229 and Thr250. Lys442 is a binding site for (6S)-5-formyl-5,6,7,8-tetrahydrofolate.

The protein belongs to the TRAFAC class TrmE-Era-EngA-EngB-Septin-like GTPase superfamily. TrmE GTPase family. As to quaternary structure, homodimer. Heterotetramer of two MnmE and two MnmG subunits. K(+) serves as cofactor.

It is found in the cytoplasm. Functionally, exhibits a very high intrinsic GTPase hydrolysis rate. Involved in the addition of a carboxymethylaminomethyl (cmnm) group at the wobble position (U34) of certain tRNAs, forming tRNA-cmnm(5)s(2)U34. The protein is tRNA modification GTPase MnmE of Mycoplasma mobile (strain ATCC 43663 / 163K / NCTC 11711) (Mesomycoplasma mobile).